Here is a 517-residue protein sequence, read N- to C-terminus: Keratin-associated protein 16-1 (517 aa).

Repeat copies occupy residues 73-77, 93-97, 128-132, 153-157, 168-172, 198-202, 208-212, 228-232, 248-252, 283-287, and 303-307. The interval 73 to 307 is 11 X 5 AA repeats of C-C-X(3); it reads CCDPVICEPS…CQEPSCCVSS (235 aa). The segment at 483 to 517 is disordered; sequence VSEEAPCQPTEAKPISPTTREAAAAQPAASKPANC. Residues 504–517 show a composition bias toward low complexity; it reads AAAAQPAASKPANC.

Belongs to the KRTAP type 16 family.

This chain is Keratin-associated protein 16-1 (KRTAP16-1), found in Homo sapiens (Human).